Reading from the N-terminus, the 187-residue chain is Threonylcarbamoyl-AMP synthase (187 aa).

The YrdC-like domain maps to 4 to 187; that stretch reads QSTIAAAITC…DAMNGKVFRG (184 aa).

The protein belongs to the SUA5 family. TsaC subfamily.

The protein resides in the cytoplasm. The enzyme catalyses L-threonine + hydrogencarbonate + ATP = L-threonylcarbamoyladenylate + diphosphate + H2O. Required for the formation of a threonylcarbamoyl group on adenosine at position 37 (t(6)A37) in tRNAs that read codons beginning with adenine. Catalyzes the conversion of L-threonine, HCO(3)(-)/CO(2) and ATP to give threonylcarbamoyl-AMP (TC-AMP) as the acyladenylate intermediate, with the release of diphosphate. This is Threonylcarbamoyl-AMP synthase from Pseudoalteromonas translucida (strain TAC 125).